A 429-amino-acid chain; its full sequence is Cholesterol 7-desaturase nvd (429 aa).

A helical membrane pass occupies residues 23–43 (FVICLWTLAVTFIRIYWIFFV). The region spanning 98-201 (YGILKSSQLK…SQEVDGFIFI (104 aa)) is the Rieske domain. Residues C138, H140, C158, and H161 each coordinate [2Fe-2S] cluster.

This sequence belongs to the cholesterol 7-desaturase family. Requires [2Fe-2S] cluster as cofactor. As to expression, expressed predominantly in the prothoracic gland and weakly in brain and malpighian tubules.

The protein localises to the membrane. The catalysed reaction is cholesterol + NADPH + O2 + H(+) = 7-dehydrocholesterol + NADP(+) + 2 H2O. It carries out the reaction cholesterol + NADH + O2 + H(+) = 7-dehydrocholesterol + NAD(+) + 2 H2O. Its pathway is steroid hormone biosynthesis; dafachronic acid biosynthesis. Functionally, catalyzes the production of 7-dehydrocholesterol (7-DHC or cholesta-5,7-dien-3beta-ol) by inserting a double bond (desaturating) at the C7-C8 single bond of cholesterol. Essential regulator of steroid biosynthesis, as this reaction is the first step in the synthesis of the steroid hormone Delta(7)-dafachronic acid. Required for insect molting, metamorphosis and body growth throughout development via the regulation of ecdysteroid biosynthesis in the prothoracic gland. This chain is Cholesterol 7-desaturase nvd, found in Drosophila melanogaster (Fruit fly).